The following is a 359-amino-acid chain: Phosphate acyltransferase (359 aa).

The interval 337–359 is disordered; it reads AAGAAQPAPETEVPGAHPSPHVA.

Belongs to the PlsX family. As to quaternary structure, homodimer. Probably interacts with PlsY.

It is found in the cytoplasm. The catalysed reaction is a fatty acyl-[ACP] + phosphate = an acyl phosphate + holo-[ACP]. Its pathway is lipid metabolism; phospholipid metabolism. In terms of biological role, catalyzes the reversible formation of acyl-phosphate (acyl-PO(4)) from acyl-[acyl-carrier-protein] (acyl-ACP). This enzyme utilizes acyl-ACP as fatty acyl donor, but not acyl-CoA. In Cupriavidus necator (strain ATCC 17699 / DSM 428 / KCTC 22496 / NCIMB 10442 / H16 / Stanier 337) (Ralstonia eutropha), this protein is Phosphate acyltransferase.